The following is a 710-amino-acid chain: Choline transporter-like protein 5 (710 aa).

The interval Met1 to Phe21 is disordered. Topologically, residues Met1–Asp32 are cytoplasmic. Residues Val33–Ala53 traverse the membrane as a helical segment. Residues Trp54–Trp236 lie on the Extracellular side of the membrane. Asn82 and Asn184 each carry an N-linked (GlcNAc...) asparagine glycan. A helical membrane pass occupies residues Lys237–Leu257. At Arg258 to Thr260 the chain is on the cytoplasmic side. Residues Ala261–Trp281 form a helical membrane-spanning segment. At Tyr282–Trp319 the chain is on the extracellular side. Residues Phe320–Leu340 traverse the membrane as a helical segment. The Cytoplasmic portion of the chain corresponds to Arg341–Gln345. A helical membrane pass occupies residues Val346–Ile366. Topologically, residues Tyr367–Pro368 are extracellular. A helical membrane pass occupies residues Val369–Leu389. The Cytoplasmic segment spans residues Ala390 to Asn454. Residues Leu455–Gly475 traverse the membrane as a helical segment. Topologically, residues Ala476–Ser509 are extracellular. A helical transmembrane segment spans residues Leu510–Leu530. At Asp531 to Tyr604 the chain is on the cytoplasmic side. The chain crosses the membrane as a helical span at residues Phe605–Leu625. Topologically, residues Phe626–Tyr643 are extracellular. The chain crosses the membrane as a helical span at residues Trp644–Val664. Over Tyr665–Gln710 the chain is Cytoplasmic.

Belongs to the CTL (choline transporter-like) family.

The protein localises to the cell membrane. It carries out the reaction choline(out) + n H(+)(in) = choline(in) + n H(+)(out). Its function is as follows. Choline/H+ antiporter. The polypeptide is Choline transporter-like protein 5 (Slc44a5) (Mus musculus (Mouse)).